The primary structure comprises 250 residues: Type III pantothenate kinase (250 aa).

13 to 20 (DVGNSYLK) lines the ATP pocket. 110 to 113 (GNDL) lines the substrate pocket. Catalysis depends on D112, which acts as the Proton acceptor. T134 contacts ATP. Substrate is bound at residue T186.

The protein belongs to the type III pantothenate kinase family. In terms of assembly, homodimer. It depends on NH4(+) as a cofactor. K(+) serves as cofactor.

The protein resides in the cytoplasm. The catalysed reaction is (R)-pantothenate + ATP = (R)-4'-phosphopantothenate + ADP + H(+). It functions in the pathway cofactor biosynthesis; coenzyme A biosynthesis; CoA from (R)-pantothenate: step 1/5. In terms of biological role, catalyzes the phosphorylation of pantothenate (Pan), the first step in CoA biosynthesis. This is Type III pantothenate kinase from Mycoplasmopsis synoviae (strain 53) (Mycoplasma synoviae).